Consider the following 679-residue polypeptide: MAQHLAAVYSQIYGLTLDVSILTFVDPAHINWKTVTKNTEKINKIYLQIMPLLHNQNNIESTSLSVELQHLLHNLKIVLETFSAHLSDYNMYFENIHSLSAPCSRHKSIVFQFYNNCCVSVKMCIINDIEIFSKRLSSVFYCIRSCDALRGINHVIDFLGHLRGVSPIPLPDTYLSNIPCIYCLNEHMMLPNQGESLPSLMMCVNCKHVCKQLNPEPIQGMFENELLQRHIIVESNKQKEQNQTCSIDNQIRDASLSKLNQHTIFENISAPVLELSNLIYWSSGAHKKCANVENTSEMAKLLSYEAKMQNYRKYICKNSTHFFDKYKPYPIESIFCGGIFSSVDDTVKSLKSDCSLAFMKRANYQQLIKKQNELFVRLNKILQGEDTVSHAASAVPLSDKATIVNPDQVLHDAHARKDAYLQKVTKDGLKSLYTCLETQGAVLSNTLSMRVWGGAVYDEIVKLKNHFLFRDQFISLDWIHCETDSVTGFENSKYIKNLIYSQKLSSEHISSLTLQFYKLITGPLSQNVSFFPLPSNIALAHCLDAAGALPHHKLLLTEMIWPSIEPKDWVSQTYNKFYTITSTDLNSIQKEAWFFIRELVLSVSLYNEVLEKNLLVFSALNFEKNCVNLSPNQFCSGIYLTYEDSSPLIFVYENQGWVFKDLYALLYHHLQLSGKNHGT.

The C3H1-type zinc-finger motif lies at 180–208 (CIYCLNEHMMLPNQGESLPSLMMCVNCKH).

It belongs to the herpesviridae TRM1 protein family. Associates with TRM2 and TRM3 to form the tripartite terminase complex. Interacts with portal protein.

Its subcellular location is the host nucleus. Functionally, component of the molecular motor that translocates viral genomic DNA in empty capsid during DNA packaging. Forms a tripartite terminase complex together with TRM2 and TRM3 in the host cytoplasm. Once the complex reaches the host nucleus, it interacts with the capsid portal vertex. This portal forms a ring in which genomic DNA is translocated into the capsid. TRM1 carries an endonuclease activity that plays an important role for the cleavage of concatemeric viral DNA into unit length genomes. This chain is Tripartite terminase subunit 1, found in Saimiriine herpesvirus 2 (strain 11) (SaHV-2).